The sequence spans 264 residues: DNA repair protein RecO (264 aa).

Belongs to the RecO family.

In terms of biological role, involved in DNA repair and RecF pathway recombination. In Prosthecochloris aestuarii (strain DSM 271 / SK 413), this protein is DNA repair protein RecO.